Reading from the N-terminus, the 207-residue chain is Pyridoxine/pyridoxamine 5'-phosphate oxidase (207 aa).

Residues 53–58 (RMVLLK), 68–69 (YT), K75, and Q97 each bind FMN. K58 contacts substrate. Positions 115, 119, and 123 each coordinate substrate. Residues 132 to 133 (QS) and W177 contribute to the FMN site. A substrate-binding site is contributed by 183–185 (RLH). R187 is a binding site for FMN.

It belongs to the pyridoxamine 5'-phosphate oxidase family. Homodimer. Requires FMN as cofactor.

The catalysed reaction is pyridoxamine 5'-phosphate + O2 + H2O = pyridoxal 5'-phosphate + H2O2 + NH4(+). The enzyme catalyses pyridoxine 5'-phosphate + O2 = pyridoxal 5'-phosphate + H2O2. It functions in the pathway cofactor metabolism; pyridoxal 5'-phosphate salvage; pyridoxal 5'-phosphate from pyridoxamine 5'-phosphate: step 1/1. It participates in cofactor metabolism; pyridoxal 5'-phosphate salvage; pyridoxal 5'-phosphate from pyridoxine 5'-phosphate: step 1/1. Functionally, catalyzes the oxidation of either pyridoxine 5'-phosphate (PNP) or pyridoxamine 5'-phosphate (PMP) into pyridoxal 5'-phosphate (PLP). This is Pyridoxine/pyridoxamine 5'-phosphate oxidase from Bartonella quintana (strain Toulouse) (Rochalimaea quintana).